A 176-amino-acid polypeptide reads, in one-letter code: Ribosome maturation factor RimM (176 aa).

In terms of domain architecture, PRC barrel spans 97-176 (EDEFYWRDLI…QILVDWDPDF (80 aa)).

It belongs to the RimM family. As to quaternary structure, binds ribosomal protein uS19.

It localises to the cytoplasm. Its function is as follows. An accessory protein needed during the final step in the assembly of 30S ribosomal subunit, possibly for assembly of the head region. Essential for efficient processing of 16S rRNA. May be needed both before and after RbfA during the maturation of 16S rRNA. It has affinity for free ribosomal 30S subunits but not for 70S ribosomes. The sequence is that of Ribosome maturation factor RimM from Shewanella sp. (strain MR-4).